The following is a 141-amino-acid chain: Hemoglobin subunit alpha (141 aa).

The Globin domain occupies valine 1–arginine 141. Serine 3 bears the Phosphoserine mark. Lysine 7 bears the N6-succinyllysine mark. Threonine 8 bears the Phosphothreonine mark. Position 11 is an N6-succinyllysine (lysine 11). Lysine 16 carries the N6-acetyllysine; alternate modification. N6-succinyllysine; alternate is present on lysine 16. Residue tyrosine 24 is modified to Phosphotyrosine. Serine 35 is subject to Phosphoserine. Lysine 40 carries the N6-succinyllysine modification. Serine 49 bears the Phosphoserine mark. O2 is bound at residue histidine 58. Histidine 87 contacts heme b. Serine 102 carries the post-translational modification Phosphoserine. Residue threonine 108 is modified to Phosphothreonine. Serine 124 carries the post-translational modification Phosphoserine. A phosphothreonine mark is found at threonine 134 and threonine 137. Phosphoserine is present on serine 138.

It belongs to the globin family. Heterotetramer of two alpha chains and two beta chains. Red blood cells.

Functionally, involved in oxygen transport from the lung to the various peripheral tissues. In terms of biological role, hemopressin acts as an antagonist peptide of the cannabinoid receptor CNR1. Hemopressin-binding efficiently blocks cannabinoid receptor CNR1 and subsequent signaling. The chain is Hemoglobin subunit alpha (HBA) from Lutra lutra (European river otter).